A 181-amino-acid chain; its full sequence is uncharacterized protein (181 aa).

It belongs to the isochorismatase family.

This is an uncharacterized protein from Bacillus subtilis (strain 168).